We begin with the raw amino-acid sequence, 918 residues long: MAASVDNRQYGPLQPPLSGVVRSFKNGPNHRADSPVRGCNFPNSNVDYNNNRPLKSSVKIQEAAAEEMEDSCSEDENENEFRDLIVKGNRELEPSILDHRDEGTADNWIERNASMVRLTGKHPFNSEPPLNRLMHHGFITPVPLHYVRNHGVVPKAKWADWTVEVCGLVKRPAKFTMDQLLNEFRFREFPATLVCAGNRRKEQNMVKQSIGFNWGAAGVSTSVWRRVPLCDLLKRCGILSRKKGALNVCFEGAEDLPGGGGSKYGTSIKKELAMDPARDIILAYMQNGEQLAPDHGFPVRMIIPGFIGGRMVKWLKRIIVTTKESENYYHFKDNRVLPSHVDADVANAEAWWYKPEHIINELNINSVITTPCHEEILPINAWTTQRPYTLRGYSYSGGGKKVTRVEVTMDSGETWQVCTLDHPEKANKYGKYWCWCFWSLEVEVLDLLSAKEIAVRAWDETHNTQPEKLIWNLMGMMNNCWFRVKTNMCKPHKGEIGIVFEHPTQPGNQSGGWMDRERHLEISTESNQTLKKSVSTPFMNTASNTYTLSEVKKHNSPQSAWIIVHGHVYDCTRFLKDHPGGSDSILINAGTDCTEEFDAIHSDKAKKMLEDYRIGELITTGYASDSSSNSPNNSTHGASNFSHLAPIREAPVSRRVALAPNEKIPCKLISKTSISHDVRVFRFALPGGQDQALGLPVGKHIFICATVDGKLCMRAYTPTSSIDEMGFFELVVKVYFKGVHPKFPNGGIMSQYLDSMEVGSTLDVKGPLGHIEYTGRGNFMVHGKPRFARRLAMLAGGTGITPIYQVVQAILKDPEDETEMYVVYANRTEDDILLRDELDTWAKKNQRLKVWYVVQESIREGWEYSVGFITENILREHIPAAAEDTLALACGPPAMIQFAVQPNLEKMNYDTKNSLLVF.

The disordered stretch occupies residues 25-44; that stretch reads KNGPNHRADSPVRGCNFPNS. Cysteine 195 is a Mo-molybdopterin binding site. In terms of domain architecture, Cytochrome b5 heme-binding spans 543 to 618; it reads SNTYTLSEVK…LEDYRIGELI (76 aa). Residues histidine 578 and histidine 601 each contribute to the heme site. Residues 661–774 enclose the FAD-binding FR-type domain; it reads NEKIPCKLIS…KGPLGHIEYT (114 aa). Residues 714–717, 731–735, phenylalanine 736, phenylalanine 743, 748–750, and threonine 801 each bind FAD; these read RAYT, VVKVY, and IMS.

This sequence belongs to the nitrate reductase family. In terms of assembly, homodimer. The cofactor is FAD. It depends on heme as a cofactor. Requires Mo-molybdopterin as cofactor.

The enzyme catalyses nitrite + NAD(+) + H2O = nitrate + NADH + H(+). Functionally, nitrate reductase is a key enzyme involved in the first step of nitrate assimilation in plants, fungi and bacteria. This Cucurbita maxima (Pumpkin) protein is Nitrate reductase [NADH].